A 375-amino-acid chain; its full sequence is Erythronate-4-phosphate dehydrogenase (375 aa).

The substrate site is built by S45 and T66. NAD(+)-binding positions include D146, T175, 206 to 208 (ASR), and D232. Residue R208 is part of the active site. Residue E237 is part of the active site. The active-site Proton donor is H254. G257 contacts NAD(+). A substrate-binding site is contributed by Y258.

It belongs to the D-isomer specific 2-hydroxyacid dehydrogenase family. PdxB subfamily. In terms of assembly, homodimer.

It is found in the cytoplasm. It carries out the reaction 4-phospho-D-erythronate + NAD(+) = (R)-3-hydroxy-2-oxo-4-phosphooxybutanoate + NADH + H(+). It functions in the pathway cofactor biosynthesis; pyridoxine 5'-phosphate biosynthesis; pyridoxine 5'-phosphate from D-erythrose 4-phosphate: step 2/5. Its function is as follows. Catalyzes the oxidation of erythronate-4-phosphate to 3-hydroxy-2-oxo-4-phosphonooxybutanoate. This chain is Erythronate-4-phosphate dehydrogenase, found in Photorhabdus laumondii subsp. laumondii (strain DSM 15139 / CIP 105565 / TT01) (Photorhabdus luminescens subsp. laumondii).